Here is a 387-residue protein sequence, read N- to C-terminus: Patatin-11 (387 aa).

An N-terminal signal peptide occupies residues 1 to 23 (MATTKSVLVLIFMILATTSSTFA). The PNPLA domain maps to 32 to 230 (LSTDGGGIKG…TVGDPALLSL (199 aa)). The GXGXXG signature appears at 36–41 (GGGIKG). Residues 75–79 (GTSTG) carry the GXSXG motif. S77 (nucleophile) is an active-site residue. Residue N115 is glycosylated (N-linked (GlcNAc...) asparagine). D216 (proton acceptor) is an active-site residue. The DGA/G signature appears at 216-218 (DGG). Residues 322–385 (ENALNGTTTE…DRKKLRANKA (64 aa)) adopt a coiled-coil conformation. Residue N326 is glycosylated (N-linked (GlcNAc...) asparagine).

It belongs to the patatin family. Tuber.

Its subcellular location is the vacuole. Functionally, probable lipolytic acyl hydrolase (LAH), an activity which is thought to be involved in the response of tubers to pathogens. This chain is Patatin-11, found in Solanum tuberosum (Potato).